The primary structure comprises 226 residues: Urease accessory protein UreF (226 aa).

It belongs to the UreF family. As to quaternary structure, ureD, UreF and UreG form a complex that acts as a GTP-hydrolysis-dependent molecular chaperone, activating the urease apoprotein by helping to assemble the nickel containing metallocenter of UreC. The UreE protein probably delivers the nickel.

The protein localises to the cytoplasm. Functionally, required for maturation of urease via the functional incorporation of the urease nickel metallocenter. The protein is Urease accessory protein UreF of Corynebacterium glutamicum (strain R).